Consider the following 194-residue polypeptide: Putative 3-methyladenine DNA glycosylase (194 aa).

The protein belongs to the DNA glycosylase MPG family.

The polypeptide is Putative 3-methyladenine DNA glycosylase (Chlamydia felis (strain Fe/C-56) (Chlamydophila felis)).